Reading from the N-terminus, the 246-residue chain is UDP-N-acetyl-D-mannosaminuronic acid transferase (246 aa).

It belongs to the glycosyltransferase 26 family.

The enzyme catalyses UDP-N-acetyl-alpha-D-mannosaminouronate + N-acetyl-alpha-D-glucosaminyl-di-trans,octa-cis-undecaprenyl diphosphate = beta-D-ManNAcA-(1-&gt;4)-alpha-D-GlcNAc-di-trans,octa-cis-undecaprenyl diphosphate + UDP + H(+). It functions in the pathway bacterial outer membrane biogenesis; enterobacterial common antigen biosynthesis. In terms of biological role, catalyzes the synthesis of Und-PP-GlcNAc-ManNAcA (Lipid II), the second lipid-linked intermediate involved in enterobacterial common antigen (ECA) synthesis. The chain is UDP-N-acetyl-D-mannosaminuronic acid transferase from Escherichia coli O157:H7.